Consider the following 317-residue polypeptide: RLIMFVGDPSSSNELDRFSVCPFSNDTVKMIFLTRENRKHDFYTLDTMNRHNEFKKSIIKRPVVFITHGFTSSATEKNFVAMSEALMHTGDFLIIMVDWRMAACTDEYPGLKYMFYKAAVGNTRLVGNFIAMIAKKLVEQYKVPMTNIRLVGHSLGAHISGFAGKRVQELKLGKFSEIIGLDPAGPSFKKNDCSERICETDAHYVQILHTSSNLGTERTLGTVDFYINNGSNQPGCRYIIGETCSHTRAVKYFTECIRRECCLIGVPQSKNPQPVSKCTRNECVCVGLNAKKYPKRGSFYVPVEAEAPYCNNNGKII.

The signal sequence occupies residues 1-7 (RLIMFVG). The propeptide occupies 8-17 (DPSSSNELDR). A disulfide bond links cysteine 21 and cysteine 104. The N-linked (GlcNAc...) asparagine glycan is linked to asparagine 25. Serine 154 functions as the Nucleophile in the catalytic mechanism. Aspartate 182 serves as the catalytic Charge relay system. The cysteines at positions 193 and 198 are disulfide-linked. Asparagine 229 is a glycosylation site (N-linked (GlcNAc...) asparagine). Cysteine 236 and cysteine 244 are joined by a disulfide. Histidine 246 functions as the Charge relay system in the catalytic mechanism. Disulfide bonds link cysteine 261-cysteine 285, cysteine 262-cysteine 310, and cysteine 278-cysteine 283.

The protein belongs to the AB hydrolase superfamily. Lipase family. As to expression, expressed by the venom gland.

The protein resides in the secreted. The catalysed reaction is a 1,2-diacyl-sn-glycero-3-phosphocholine + H2O = a 2-acyl-sn-glycero-3-phosphocholine + a fatty acid + H(+). In terms of biological role, catalyzes the hydrolysis of phosphatidylcholine with phospholipase A1 activity. May act as an allergen and induce hemolytic activity. This is Phospholipase A1 1 from Dolichovespula maculata (Bald-faced hornet).